Consider the following 445-residue polypeptide: T-box transcription factor TBX19 (445 aa).

A DNA-binding region (T-box) is located at residues 45–218 (LEDAPLWQRF…YNPFAKAFLD (174 aa)).

It localises to the nucleus. Transcriptional regulator involved in developmental processes. Can activate POMC gene expression and repress the alpha glycoprotein subunit and thyroid-stimulating hormone beta promoters. The protein is T-box transcription factor TBX19 of Canis lupus familiaris (Dog).